Reading from the N-terminus, the 390-residue chain is GTPase Obg (390 aa).

Positions Met1–Leu159 constitute an Obg domain. Residues Ala160–Glu333 enclose the OBG-type G domain. GTP is bound by residues Gly166–Ser173, Phe191–Ile195, Asp213–Gly216, Asn283–Asp286, and Ser314–Ile316. 2 residues coordinate Mg(2+): Ser173 and Thr193. The span at Thr367–Asp382 shows a compositional bias: acidic residues. A disordered region spans residues Thr367–Asp390.

The protein belongs to the TRAFAC class OBG-HflX-like GTPase superfamily. OBG GTPase family. Monomer. Mg(2+) serves as cofactor.

The protein resides in the cytoplasm. In terms of biological role, an essential GTPase which binds GTP, GDP and possibly (p)ppGpp with moderate affinity, with high nucleotide exchange rates and a fairly low GTP hydrolysis rate. Plays a role in control of the cell cycle, stress response, ribosome biogenesis and in those bacteria that undergo differentiation, in morphogenesis control. The sequence is that of GTPase Obg from Vibrio parahaemolyticus serotype O3:K6 (strain RIMD 2210633).